A 354-amino-acid chain; its full sequence is Guanine nucleotide-binding protein G(i) subunit alpha-3 (354 aa).

Gly2 is lipidated: N-myristoyl glycine. Cys3 is lipidated: S-palmitoyl cysteine. Residues 32-354 enclose the G-alpha domain; sequence KEVKLLLLGA…KNNLKECGLY (323 aa). Positions 35-48 are G1 motif; the sequence is KLLLLGAGESGKST. 25 residues coordinate GTP: Gly42, Glu43, Ser44, Gly45, Lys46, Ser47, Thr48, Asp150, Ser151, Leu175, Arg176, Thr177, Arg178, Val179, Lys180, Thr181, Val201, Gly203, Asn269, Lys270, Asp272, Leu273, Cys325, Ala326, and Thr327. Mg(2+) is bound at residue Ser47. The G2 motif stretch occupies residues 173-181; it reads DVLRTRVKT. Residue Thr181 participates in Mg(2+) binding. Residues 196-205 form a G3 motif region; that stretch reads FKMFDVGGQR. Residues 265-272 form a G4 motif region; sequence ILFLNKKD. A G5 motif region spans residues 324–329; that stretch reads TCATDT.

Belongs to the G-alpha family. G(i/o/t/z) subfamily. Heterotrimeric G proteins are composed of 3 units; alpha, beta and gamma. The alpha subunit contains the guanine nucleotide binding site. GTP binding causes dissociation of the heterotrimer, liberating the individual subunits so that they can interact with downstream effector proteins. Forms a complex with CCDC88A/GIV and EGFR which leads to enhanced EGFR signaling and triggering of cell migration; ligand stimulation is required for recruitment of GNAI3 to the complex. Interacts (inactive GDP-bound form) with CCDC88A/GIV (via GBA motif); the interaction leads to activation of GNAI3. Interacts (inactive GDP-bound form) with CCDC88C/DAPLE (via GBA motif); the interaction leads to activation of GNAI3. Interacts (inactive GDP-bound form) with NUCB1 (via GBA motif) and NUCB2 (via GBA motif); the interaction leads to activation of GNAI3. Interacts (inactive GDP-bound form) with PLCD4 (via GBA motif); the interaction leads to activation of GNAI3. Interacts with INSR; the interaction is probably mediated by CCDC88A/GIV. Interacts with GPSM1. Interacts (GDP-bound form) with GPSM2 (via GoLoco domains). Does not interact with RGS2. Interacts with RGS8 and RGS10; this strongly enhances the intrinsic GTPase activity. Interacts with RGS12. Interacts with RGS16; this strongly enhances the intrinsic GTPase activity. Interacts (via active GTP- or inactive GDP-bound form) with RGS14. Interacts (via active GTP-bound form) with TRPC5 (via ANK repeats) in a homotetrameric ion channel; the interaction is direct and activates the channel activity. As to expression, ubiquitous.

The protein resides in the cytoplasm. Its subcellular location is the cell membrane. The protein localises to the cytoskeleton. It localises to the microtubule organizing center. It is found in the centrosome. In terms of biological role, heterotrimeric guanine nucleotide-binding proteins (G proteins) function as transducers downstream of G protein-coupled receptors (GPCRs) in numerous signaling cascades. The alpha chain contains the guanine nucleotide binding site and alternates between an active, GTP-bound state and an inactive, GDP-bound state. Signaling by an activated GPCR promotes GDP release and GTP binding. The alpha subunit has a low GTPase activity that converts bound GTP to GDP, thereby terminating the signal. Both GDP release and GTP hydrolysis are modulated by numerous regulatory proteins. Signaling is mediated via effector proteins, such as adenylate cyclase. Inhibits adenylate cyclase activity, leading to decreased intracellular cAMP levels. Stimulates the activity of receptor-regulated K(+) channels. The active GTP-bound form prevents the association of RGS14 with centrosomes and is required for the translocation of RGS14 from the cytoplasm to the plasma membrane. May play a role in cell division. The active GTP-bound form activates the calcium permeant TRPC5 ion channels. The protein is Guanine nucleotide-binding protein G(i) subunit alpha-3 (Gnai3) of Rattus norvegicus (Rat).